Consider the following 955-residue polypeptide: Leucine--tRNA ligase (955 aa).

The 'HIGH' region signature appears at 51-61; it reads PYLNGVLHAGH. The 'KMSKS' region signature appears at 647 to 651; that stretch reads KLSKS. K650 contacts ATP.

This sequence belongs to the class-I aminoacyl-tRNA synthetase family.

It localises to the cytoplasm. The catalysed reaction is tRNA(Leu) + L-leucine + ATP = L-leucyl-tRNA(Leu) + AMP + diphosphate. This Methanococcus maripaludis (strain C7 / ATCC BAA-1331) protein is Leucine--tRNA ligase.